The primary structure comprises 350 residues: MKLVDEAEIEVFAGNGGNGCIGFRREKFIPLGGPDGGDGGAGGSVYIRADENLNTLVDFRHDRIFKAQRGENGMGRQAYGKGGEDLTITVPVGTVVINVATDEVIGDLTQHGDRLLVAKGGRGGLGNMHFKSSTNRSPRQALPGEPGEERTLKLELKLLADVGLLGFPNAGKSTLIRAVSAATPKVADYPFTTLYPNLGVVKVENYRSFVIADIPGLIEGAADGAGLGAQFLRHLQRTRLLLHLVDISPMEGGVEGISPVEQVRAIERELEKHDPELLRKPRWLVLNKADLMFEDEAKAAAEQIVAELGWKEPWFLVSALGREGTFPIMSRIMAFFDRQKEEEQEARNAQ.

One can recognise an Obg domain in the interval 1–159 (MKLVDEAEIE…RTLKLELKLL (159 aa)). Residues 126–147 (GNMHFKSSTNRSPRQALPGEPG) are disordered. An OBG-type G domain is found at 160–337 (ADVGLLGFPN…IMSRIMAFFD (178 aa)). GTP is bound by residues 166 to 173 (GFPNAGKS), 191 to 195 (FTTLY), 213 to 216 (DIPG), 287 to 290 (NKAD), and 318 to 320 (SAL). Positions 173 and 193 each coordinate Mg(2+).

Belongs to the TRAFAC class OBG-HflX-like GTPase superfamily. OBG GTPase family. Monomer. It depends on Mg(2+) as a cofactor.

Its subcellular location is the cytoplasm. An essential GTPase which binds GTP, GDP and possibly (p)ppGpp with moderate affinity, with high nucleotide exchange rates and a fairly low GTP hydrolysis rate. Plays a role in control of the cell cycle, stress response, ribosome biogenesis and in those bacteria that undergo differentiation, in morphogenesis control. This Stenotrophomonas maltophilia (strain K279a) protein is GTPase Obg.